Here is a 451-residue protein sequence, read N- to C-terminus: Speckle-type POZ protein homolog (451 aa).

The disordered stretch occupies residues 51–75 (EVVSSGSGNSAHGRSISPSPSSASH). Residues 60–75 (SAHGRSISPSPSSASH) are compositionally biased toward low complexity. The region spanning 95-225 (KFNYMWTINN…GDRLSIFCEV (131 aa)) is the MATH domain. The BTB domain maps to 265 to 338 (SDFTLVCKSD…MYTGQTKYIE (74 aa)).

Belongs to the Tdpoz family.

The protein localises to the nucleus. It localises to the nucleus speckle. It participates in protein modification; protein ubiquitination. In terms of biological role, mediates ubiquitination and proteasomal degradation of target proteins, most likely in complex with cul-3. May promote the degradation of bromodomain-containing proteins such as bet-1. The sequence is that of Speckle-type POZ protein homolog from Caenorhabditis elegans.